We begin with the raw amino-acid sequence, 314 residues long: Atrochrysone carboxyl ACP thioesterase AgnL7 (314 aa).

Zn(2+)-binding residues include His103, His105, Asp107, and His108. The active-site Proton donor/acceptor is the Asp107.

It belongs to the metallo-beta-lactamase superfamily. The cofactor is Zn(2+).

The enzyme catalyses atrochrysone carboxyl-[ACP] + H2O = atrochrysone carboxylate + holo-[ACP] + H(+). It participates in secondary metabolite biosynthesis. In terms of biological role, atrochrysone carboxyl ACP thioesterase; part of the gene cluster that mediates the biosynthesis of agnestins, dihydroxy-xanthone metabolites. The pathway begins with the assembly and cyclization of atrochrysone thioester by the non-reducing polyketide synthase Agnpks1. The atrochrysone carboxyl ACP thioesterase AgnL7 then breaks the thioester bond and releases the atrochrysone carboxylic acid as the first enzyme-free intermediate. The decarboxylase AgnL1 then catalyzes the concerted decarboxylation-elimination required to convert atochrysone carboxylic acid into emodin anthrone, which is further oxidized to emodin by the anthrone oxygenase AgnL2. Emodin then undergoes reduction catalyzed by the oxidoreductase AgnL4 to yield the dihydroquinone tautomer which is the substrate for reduction by the short chain dehydrogenase AgnL6 reduction to produce hydroxyketone, followed by AgnL8 dehydration and likely spontaneous autoxidation to chrysophanol. Baeyer-Villiger oxidation by the oxidase AgnL3 leads to monodictyphenone via cleavage of the C-10/C-10a bond of chrysophanol. Alternative cleavage at the C-4a/C-10 bond of chrysophanol also leads to the formation some cephalone F. Further conversion to agnestins A and B, requires reduction to dihydro-monodictyphenone, oxidation to agnestin C probably via an epoxide, and rearrangement to either agnestin A or agnestin B directly, although agnestin A or agnestin B can also interconvert. Within the cluster, AgnR1 is the only unassigned oxidoreductase present which could be involved in this conversion. However, AgnR1 seems not to be involved in this step, and thus genes involved in the proposed oxidation/reduction may be located elsewhere on the genome. Further agnestin A derivatives are probably formed by spontaneous decarboxylations, dehydrations and methanolysis reactions. This chain is Atrochrysone carboxyl ACP thioesterase AgnL7, found in Paecilomyces divaricatus (Penicillium divaricatum).